The primary structure comprises 362 residues: GDSL esterase/lipase At5g18430 (362 aa).

The signal sequence occupies residues 1–19 (MTISTVIAFMSMFLVFVMS). S35 acts as the Nucleophile in catalysis. An N-linked (GlcNAc...) asparagine glycan is attached at N117. Residues D327 and H330 contribute to the active site. Residue N355 is glycosylated (N-linked (GlcNAc...) asparagine).

This sequence belongs to the 'GDSL' lipolytic enzyme family.

The protein resides in the secreted. This chain is GDSL esterase/lipase At5g18430, found in Arabidopsis thaliana (Mouse-ear cress).